An 89-amino-acid chain; its full sequence is MPLASDVKQKIMSDYATVERDTGSPEVQVAMLTRRISDLTEHLKVHKHDHHSRRGLLLLVGRRRRLLNYLSKTDINRYRALIERLGLRR.

The protein belongs to the universal ribosomal protein uS15 family. In terms of assembly, part of the 30S ribosomal subunit. Forms a bridge to the 50S subunit in the 70S ribosome, contacting the 23S rRNA.

One of the primary rRNA binding proteins, it binds directly to 16S rRNA where it helps nucleate assembly of the platform of the 30S subunit by binding and bridging several RNA helices of the 16S rRNA. Functionally, forms an intersubunit bridge (bridge B4) with the 23S rRNA of the 50S subunit in the ribosome. This is Small ribosomal subunit protein uS15 from Frankia alni (strain DSM 45986 / CECT 9034 / ACN14a).